The chain runs to 343 residues: Phosphatidylglycerol--prolipoprotein diacylglyceryl transferase (343 aa).

A run of 4 helical transmembrane segments spans residues 22-42 (IPIRAYALCIIAGIVAALIIG), 54-74 (GVIYDIALWAVPFGLVGGRLY), 97-117 (VWEGGLGIWGAVALGGVGAWI), and 123-143 (GIPLPAFADAIAPGIVLAQAI). Arg145 contacts a 1,2-diacyl-sn-glycero-3-phospho-(1'-sn-glycerol). 2 consecutive transmembrane segments (helical) span residues 193–213 (VVHPTFLYELLWNVLVFVLLI) and 257–277 (VNSFTSTLVFVGAVAYILLAP). The interval 283-343 (PATLGGTPSS…SADNSGIVEK (61 aa)) is disordered. Acidic residues predominate over residues 295–325 (GGDDTAETEATADTEDTEDTEDGVTDAPEAD).

Belongs to the Lgt family.

It localises to the cell membrane. It catalyses the reaction L-cysteinyl-[prolipoprotein] + a 1,2-diacyl-sn-glycero-3-phospho-(1'-sn-glycerol) = an S-1,2-diacyl-sn-glyceryl-L-cysteinyl-[prolipoprotein] + sn-glycerol 1-phosphate + H(+). Its pathway is protein modification; lipoprotein biosynthesis (diacylglyceryl transfer). In terms of biological role, catalyzes the transfer of the diacylglyceryl group from phosphatidylglycerol to the sulfhydryl group of the N-terminal cysteine of a prolipoprotein, the first step in the formation of mature lipoproteins. The sequence is that of Phosphatidylglycerol--prolipoprotein diacylglyceryl transferase from Mycobacteroides abscessus (strain ATCC 19977 / DSM 44196 / CCUG 20993 / CIP 104536 / JCM 13569 / NCTC 13031 / TMC 1543 / L948) (Mycobacterium abscessus).